Consider the following 213-residue polypeptide: Maleylacetoacetate isomerase (213 aa).

Positions 3–84 constitute a GST N-terminal domain; the sequence is NETVLYDYWR…YLAETRDGTG (82 aa). In terms of domain architecture, GST C-terminal spans 89-213; sequence HPIDRQRVRA…QRAHPDRAKP (125 aa).

Belongs to the GST superfamily. Zeta family.

It carries out the reaction 4-maleylacetoacetate = 4-fumarylacetoacetate. It functions in the pathway amino-acid degradation; L-phenylalanine degradation; acetoacetate and fumarate from L-phenylalanine: step 5/6. This Rhizobium meliloti (strain 1021) (Ensifer meliloti) protein is Maleylacetoacetate isomerase (maiA).